The following is a 199-amino-acid chain: Probable GTP-binding protein EngB (199 aa).

The EngB-type G domain maps to 28–199 (DLPEIALAGR…DSWDAILEQV (172 aa)). Residues 36–43 (GRSNVGKS), 63–67 (GKTQL), 81–84 (DVPG), 148–151 (TKAD), and 180–182 (FSS) each bind GTP. Mg(2+) is bound by residues serine 43 and threonine 65.

The protein belongs to the TRAFAC class TrmE-Era-EngA-EngB-Septin-like GTPase superfamily. EngB GTPase family. Requires Mg(2+) as cofactor.

Functionally, necessary for normal cell division and for the maintenance of normal septation. The protein is Probable GTP-binding protein EngB of Streptococcus pyogenes serotype M6 (strain ATCC BAA-946 / MGAS10394).